The chain runs to 436 residues: 5-hydroxytryptamine receptor 6 (436 aa).

The Extracellular portion of the chain corresponds to M1–G27. A glycan (N-linked (GlcNAc...) asparagine) is linked at N9. The chain crosses the membrane as a helical span at residues W28 to C52. The Cytoplasmic portion of the chain corresponds to T53 to N62. The chain crosses the membrane as a helical span at residues F63–L88. Residues Y89–R96 lie on the Extracellular side of the membrane. A helical membrane pass occupies residues G97–L122. C99 and C180 form a disulfide bridge. D106 provides a ligand contact to serotonin. At D123–R142 the chain is on the cytoplasmic side. The chain crosses the membrane as a helical span at residues A143–H167. Residues E168 to S185 are Extracellular-facing. A helical transmembrane segment spans residues L186–C209. Residues R210–A266 are Cytoplasmic-facing. The chain crosses the membrane as a helical span at residues S267–V293. N288 contributes to the serotonin binding site. Topologically, residues C294 to P299 are extracellular. The chain crosses the membrane as a helical span at residues G300–F323. Residues M324–P436 are Cytoplasmic-facing.

The protein belongs to the G-protein coupled receptor 1 family. Interacts with MTOR, RPTOR and NF1. Interacts with CDK5. Localized exclusively in the central nervous system, predominantly in the corpus striatum but also in various limbic and cortical regions.

It localises to the cell membrane. Functionally, G-protein coupled receptor for 5-hydroxytryptamine (serotonin), a biogenic hormone that functions as a neurotransmitter, a hormone and a mitogen. Also has a high affinity for tricyclic psychotropic drugs. Ligand binding causes a conformation change that triggers signaling via guanine nucleotide-binding proteins (G proteins) and modulates the activity of downstream effectors. HTR6 is coupled to G(s) G alpha proteins and mediates activation of adenylate cyclase activity. Controls pyramidal neurons migration during corticogenesis, through the regulation of CDK5 activity. Is an activator of mTOR signaling. This Rattus norvegicus (Rat) protein is 5-hydroxytryptamine receptor 6 (Htr6).